We begin with the raw amino-acid sequence, 384 residues long: MFTGGGTIALIERLATSWLTAIRLILSWHPIHAPNRNQEPLDSLCREGREYIVMISGTVHPRHATWPFWQVMRKCLDWCCAFHPPDDHSCEFGAPRIGIRLEGENHFFAPILGLYSVVMTWSPISCYREFPIRQNSKEPDPQPSTSSEPEPQPSTSSHRNIPVARVRPLVAQQKVPKTRPLDTEIHRPGPIAIQNPTDTDEPELRLNPRPRPGPSGQNTRPRTPTLDLDTVVVRDHPVTHRRPRSPSPPEEDYTNQDENLSYTPQLIHSSPDSEVAEEIYAQPDPWGTQELLLANRERTPDDQTDITDDSADWSEGETRRPSHSEVGERRLSRENNSEDPNRSRSRSRSRERRRRRPRVRPGRRSTATTIRDLVVLGMSSSDDE.

Disordered regions lie at residues 133–257 and 297–368; these read RQNS…TNQD and ERTP…STAT. The segment covering 143-157 has biased composition (low complexity); that stretch reads PSTSSEPEPQPSTSS. Positions 302 to 315 are enriched in acidic residues; sequence DQTDITDDSADWSE. Residues 316–342 show a composition bias toward basic and acidic residues; the sequence is GETRRPSHSEVGERRLSRENNSEDPNR. A compositionally biased stretch (basic residues) spans 343–363; sequence SRSRSRSRERRRRRPRVRPGR.

This is an uncharacterized protein from Gallid herpesvirus 2 (strain Chicken/Md5/ATCC VR-987) (GaHV-2).